A 247-amino-acid polypeptide reads, in one-letter code: 5-oxoprolinase subunit A (247 aa).

Belongs to the LamB/PxpA family. In terms of assembly, forms a complex composed of PxpA, PxpB and PxpC.

The enzyme catalyses 5-oxo-L-proline + ATP + 2 H2O = L-glutamate + ADP + phosphate + H(+). Its function is as follows. Catalyzes the cleavage of 5-oxoproline to form L-glutamate coupled to the hydrolysis of ATP to ADP and inorganic phosphate. This Vibrio vulnificus (strain YJ016) protein is 5-oxoprolinase subunit A.